The primary structure comprises 369 residues: Transcription initiation factor IIA large subunit (369 aa).

Polar residues-rich tracts occupy residues 113–210 and 218–233; these read HGNS…QNSP and TESSNTTPANSRNDVP. Residues 113 to 248 form a disordered region; it reads HGNSNYYSPP…IHDLDDAGSP (136 aa). S249 is subject to Phosphoserine. The tract at residues 282–319 is disordered; it reads IEDNEDEKKPPVDTPSDEAINSDLDDPDSDEAPETEEG. Residues 304-319 are compositionally biased toward acidic residues; the sequence is DLDDPDSDEAPETEEG.

The protein belongs to the TFIIA subunit 1 family. As to quaternary structure, TFIIA is a heterodimer of the large subunit and the small subunit gamma.

The protein localises to the nucleus. TFIIA is a component of the transcription machinery of RNA polymerase II and plays an important role in transcriptional activation. TFIIA in a complex with tbp mediates transcriptional activity. The sequence is that of Transcription initiation factor IIA large subunit from Schizosaccharomyces pombe (strain 972 / ATCC 24843) (Fission yeast).